A 281-amino-acid polypeptide reads, in one-letter code: 4-hydroxy-3-methylbut-2-enyl diphosphate reductase (281 aa).

C12 serves as a coordination point for [4Fe-4S] cluster. 2 residues coordinate (2E)-4-hydroxy-3-methylbut-2-enyl diphosphate: H41 and H74. H41 and H74 together coordinate dimethylallyl diphosphate. Residues H41 and H74 each contribute to the isopentenyl diphosphate site. C96 is a [4Fe-4S] cluster binding site. H124 serves as a coordination point for (2E)-4-hydroxy-3-methylbut-2-enyl diphosphate. H124 contributes to the dimethylallyl diphosphate binding site. H124 is an isopentenyl diphosphate binding site. Catalysis depends on E126, which acts as the Proton donor. T164 is a (2E)-4-hydroxy-3-methylbut-2-enyl diphosphate binding site. C193 contacts [4Fe-4S] cluster. The (2E)-4-hydroxy-3-methylbut-2-enyl diphosphate site is built by S221, N223, and S265. Dimethylallyl diphosphate contacts are provided by S221, N223, and S265. Isopentenyl diphosphate contacts are provided by S221, N223, and S265.

This sequence belongs to the IspH family. It depends on [4Fe-4S] cluster as a cofactor.

The catalysed reaction is isopentenyl diphosphate + 2 oxidized [2Fe-2S]-[ferredoxin] + H2O = (2E)-4-hydroxy-3-methylbut-2-enyl diphosphate + 2 reduced [2Fe-2S]-[ferredoxin] + 2 H(+). It catalyses the reaction dimethylallyl diphosphate + 2 oxidized [2Fe-2S]-[ferredoxin] + H2O = (2E)-4-hydroxy-3-methylbut-2-enyl diphosphate + 2 reduced [2Fe-2S]-[ferredoxin] + 2 H(+). The protein operates within isoprenoid biosynthesis; dimethylallyl diphosphate biosynthesis; dimethylallyl diphosphate from (2E)-4-hydroxy-3-methylbutenyl diphosphate: step 1/1. It participates in isoprenoid biosynthesis; isopentenyl diphosphate biosynthesis via DXP pathway; isopentenyl diphosphate from 1-deoxy-D-xylulose 5-phosphate: step 6/6. Functionally, catalyzes the conversion of 1-hydroxy-2-methyl-2-(E)-butenyl 4-diphosphate (HMBPP) into a mixture of isopentenyl diphosphate (IPP) and dimethylallyl diphosphate (DMAPP). Acts in the terminal step of the DOXP/MEP pathway for isoprenoid precursor biosynthesis. This is 4-hydroxy-3-methylbut-2-enyl diphosphate reductase from Oleidesulfovibrio alaskensis (strain ATCC BAA-1058 / DSM 17464 / G20) (Desulfovibrio alaskensis).